The sequence spans 539 residues: Chaperonin GroEL (539 aa).

ATP-binding positions include 29 to 32 (TLGP), 86 to 90 (DGTTT), Gly413, 476 to 478 (NAA), and Asp492.

This sequence belongs to the chaperonin (HSP60) family. In terms of assembly, forms a cylinder of 14 subunits composed of two heptameric rings stacked back-to-back. Interacts with the co-chaperonin GroES.

It is found in the cytoplasm. It catalyses the reaction ATP + H2O + a folded polypeptide = ADP + phosphate + an unfolded polypeptide.. In terms of biological role, together with its co-chaperonin GroES, plays an essential role in assisting protein folding. The GroEL-GroES system forms a nano-cage that allows encapsulation of the non-native substrate proteins and provides a physical environment optimized to promote and accelerate protein folding. This is Chaperonin GroEL from Parageobacillus thermoglucosidasius (Geobacillus thermoglucosidasius).